A 757-amino-acid chain; its full sequence is Probable ubiquitin carboxyl-terminal hydrolase MINDY-4 (757 aa).

2 disordered regions span residues 152–173 (FVSSKRPPHKSKPMQTVPGETP) and 190–334 (SLDV…LPGG). Residues 190-201 (SLDVKRMGENSR) show a composition bias toward basic and acidic residues. Ser219 and Ser223 each carry phosphoserine. Positions 232–242 (SSPSSSSTQPQ) are enriched in low complexity. Polar residues predominate over residues 254–277 (CTQQDILASSNSSPSRTSLGQLSE). Ser289 bears the Phosphoserine mark. Over residues 299-310 (PPWDRARPRDPS) the composition is skewed to basic and acidic residues. Cys456 (nucleophile) is an active-site residue. His677 (proton acceptor) is an active-site residue.

The protein belongs to the MINDY deubiquitinase family. FAM188 subfamily.

It catalyses the reaction Thiol-dependent hydrolysis of ester, thioester, amide, peptide and isopeptide bonds formed by the C-terminal Gly of ubiquitin (a 76-residue protein attached to proteins as an intracellular targeting signal).. In terms of biological role, probable hydrolase that can remove 'Lys-48'-linked conjugated ubiquitin from proteins. This is Probable ubiquitin carboxyl-terminal hydrolase MINDY-4 from Homo sapiens (Human).